Consider the following 358-residue polypeptide: UDP-N-acetylglucosamine--N-acetylmuramyl-(pentapeptide) pyrophosphoryl-undecaprenol N-acetylglucosamine transferase (358 aa).

UDP-N-acetyl-alpha-D-glucosamine-binding positions include 11–13 (TGG), N120, R161, S188, and Q282.

This sequence belongs to the glycosyltransferase 28 family. MurG subfamily.

Its subcellular location is the cell inner membrane. The catalysed reaction is di-trans,octa-cis-undecaprenyl diphospho-N-acetyl-alpha-D-muramoyl-L-alanyl-D-glutamyl-meso-2,6-diaminopimeloyl-D-alanyl-D-alanine + UDP-N-acetyl-alpha-D-glucosamine = di-trans,octa-cis-undecaprenyl diphospho-[N-acetyl-alpha-D-glucosaminyl-(1-&gt;4)]-N-acetyl-alpha-D-muramoyl-L-alanyl-D-glutamyl-meso-2,6-diaminopimeloyl-D-alanyl-D-alanine + UDP + H(+). Its pathway is cell wall biogenesis; peptidoglycan biosynthesis. Functionally, cell wall formation. Catalyzes the transfer of a GlcNAc subunit on undecaprenyl-pyrophosphoryl-MurNAc-pentapeptide (lipid intermediate I) to form undecaprenyl-pyrophosphoryl-MurNAc-(pentapeptide)GlcNAc (lipid intermediate II). This is UDP-N-acetylglucosamine--N-acetylmuramyl-(pentapeptide) pyrophosphoryl-undecaprenol N-acetylglucosamine transferase from Synechococcus sp. (strain CC9605).